Consider the following 636-residue polypeptide: MRKTKKISFLIFWVVLISIIGAISSQQCNETGYFEPWKTYDTNRRQILTSLASKVVDHYGFYNSSIGKVPDEVHVMGMCIDGTEPTVCSDCLKVAADQLQENCPNQTEAYTWTPHKTLCFARYSNSSFFKRVGLHPLYMEHSNVDIKSNLTYLNTIWEALTDRLMSDASSDYNASLSSRRYYAANVTNLTNFQNIYALMLCTPDLEKGACHNCLEKAVSEYGNLRMQRGIVAWPSCCFRWDLYPFIGAFNLTLSPPPGSKRNISVGFFVAIVVATGVVISVLSTLVVVLVCRKRKTDPPEESPKYSLQYDLKTIEAATCTFSKCNMLGQGGFGEVFKGVLQDGSEIAVKRLSKESAQGVQEFQNETSLVAKLQHRNLVGVLGFCMEGEEKILVYEFVPNKSLDQFLFEPTKKGQLDWAKRYKIIVGTARGILYLHHDSPLKIIHRDLKASNILLDAEMEPKVADFGMARIFRVDQSRADTRRVVGTHGYISPEYLMHGQFSVKSDVYSFGVLVLEIISGKRNSNFHETDESGKNLVTYAWRHWRNGSPLELVDSELEKNYQSNEVFRCIHIALLCVQNDPEQRPNLSTIIMMLTSNSITLPVPQSPVYEGMDMFLPSIKSLPGSVNDSLIDDLVPR.

An N-terminal signal peptide occupies residues Met1 to Ser25. Gnk2-homologous domains lie at Gln26 to Phe128 and Tyr138 to Phe245. At Gln26–Gly266 the chain is on the extracellular side. Asn29, Asn63, Asn105, Asn125, Asn149, Asn173, Asn185, Asn188, Asn250, and Asn262 each carry an N-linked (GlcNAc...) asparagine glycan. The helical transmembrane segment at Phe267–Val287 threads the bilayer. At Val288 to Arg636 the chain is on the cytoplasmic side. Residues Phe321–Leu600 enclose the Protein kinase domain. ATP is bound by residues Leu327–Val335 and Lys349. Tyr394 is modified (phosphotyrosine). Asp446 serves as the catalytic Proton acceptor. Ser450 carries the post-translational modification Phosphoserine. Thr486 is modified (phosphothreonine). Residue Tyr494 is modified to Phosphotyrosine.

The protein belongs to the protein kinase superfamily. Ser/Thr protein kinase family. CRK subfamily.

The protein localises to the membrane. The enzyme catalyses L-seryl-[protein] + ATP = O-phospho-L-seryl-[protein] + ADP + H(+). The catalysed reaction is L-threonyl-[protein] + ATP = O-phospho-L-threonyl-[protein] + ADP + H(+). The chain is Putative cysteine-rich receptor-like protein kinase 33 (CRK33) from Arabidopsis thaliana (Mouse-ear cress).